The primary structure comprises 275 residues: MGMMKRQFEDVTRIVIKIGTSSLVLPTGKINLEKIDQLAFVISSLMNKGKEVILVSSGAMGFGLDILKMEKRPTNLAKQQAVSSVGQVAMMSLYSQIFAHYQTNVSQILLTRDVVVFPESLANVTNAFESLISLGIVPIVNENDAVSVDEMDHATKFGDNDRLSAVVAGITKADLLIMLSDIDGLFDKNPTIYEDAQLRSHVAVITQEIIASAGGAGSKFGTGGMLSKIQSAQMVFENKGQMVLMNGANPRDILRVLEGQPLGTWFKQIEEVTHD.

Lysine 17 contributes to the ATP binding site. Residues serine 57, aspartate 144, and asparagine 160 each coordinate substrate. Residues 180–181 (SD) and 222–228 (TGGMLSK) each bind ATP.

The protein belongs to the glutamate 5-kinase family.

The protein resides in the cytoplasm. The catalysed reaction is L-glutamate + ATP = L-glutamyl 5-phosphate + ADP. The protein operates within amino-acid biosynthesis; L-proline biosynthesis; L-glutamate 5-semialdehyde from L-glutamate: step 1/2. Catalyzes the transfer of a phosphate group to glutamate to form L-glutamate 5-phosphate. The polypeptide is Glutamate 5-kinase (Streptococcus pyogenes serotype M12 (strain MGAS2096)).